Consider the following 128-residue polypeptide: Ribonuclease P protein component 4 (128 aa).

The Zn(2+) site is built by Cys63, Cys66, Cys92, and Cys95.

Belongs to the eukaryotic/archaeal RNase P protein component 4 family. As to quaternary structure, consists of a catalytic RNA component and at least 4 protein subunits. Forms a subcomplex with Rnp1 which stimulates the catalytic RNA. Zn(2+) is required as a cofactor.

Its subcellular location is the cytoplasm. It catalyses the reaction Endonucleolytic cleavage of RNA, removing 5'-extranucleotides from tRNA precursor.. Functionally, part of ribonuclease P, a protein complex that generates mature tRNA molecules by cleaving their 5'-ends. This Methanocaldococcus jannaschii (strain ATCC 43067 / DSM 2661 / JAL-1 / JCM 10045 / NBRC 100440) (Methanococcus jannaschii) protein is Ribonuclease P protein component 4.